Consider the following 203-residue polypeptide: Galactoside O-acetyltransferase (203 aa).

Residues Asp17, Ser71, Asn85, and Asp93 each contribute to the substrate site. Asn85 is a binding site for acetyl-CoA. Catalysis depends on His115, which acts as the Proton donor/acceptor. Acetyl-CoA-binding positions include Ser142, Ala160, 165-166 (TK), Arg180, and Arg183.

Belongs to the transferase hexapeptide repeat family. Homotrimer. Post-translationally, the N-terminus of this protein is heterogeneous because the initiator methionine is only partially cleaved.

It is found in the cytoplasm. It carries out the reaction a beta-D-galactoside + acetyl-CoA = a 6-acetyl-beta-D-galactoside + CoA. Functionally, catalyzes the CoA-dependent transfer of an acetyl group to the 6-O-methyl position of a range of galactosides, glucosides, and lactosides. May assist cellular detoxification by acetylating non-metabolizable pyranosides, thereby preventing their reentry into the cell. The polypeptide is Galactoside O-acetyltransferase (lacA) (Escherichia coli (strain K12)).